A 246-amino-acid polypeptide reads, in one-letter code: Acetoacetate decarboxylase (246 aa).

Residue lysine 116 is the Schiff-base intermediate with acetoacetate of the active site.

It belongs to the ADC family.

The enzyme catalyses acetoacetate + H(+) = acetone + CO2. Functionally, catalyzes the conversion of acetoacetate to acetone and carbon dioxide. This is Acetoacetate decarboxylase from Burkholderia ambifaria (strain MC40-6).